A 389-amino-acid polypeptide reads, in one-letter code: Cytochrome f (389 aa).

An N-terminal signal peptide occupies residues 1–42; it reads MTTFFISKVNGPVNKSLIWLKIHIYEFFLLKFMLLFPPTVCS. The heme site is built by Tyr-105, Cys-125, Cys-128, and His-129. The helical transmembrane segment at 355 to 375 threads the bilayer; the sequence is LQALIVFFIFVILTQLFLVLK.

It belongs to the cytochrome f family. As to quaternary structure, the 4 large subunits of the cytochrome b6-f complex are cytochrome b6, subunit IV (17 kDa polypeptide, petD), cytochrome f and the Rieske protein, while the 4 small subunits are PetG, PetL, PetM and PetN. The complex functions as a dimer. It depends on heme as a cofactor.

It localises to the plastid. The protein resides in the chloroplast thylakoid membrane. Its function is as follows. Component of the cytochrome b6-f complex, which mediates electron transfer between photosystem II (PSII) and photosystem I (PSI), cyclic electron flow around PSI, and state transitions. This is Cytochrome f from Pleurastrum terricola (Filamentous green alga).